We begin with the raw amino-acid sequence, 212 residues long: ER lumen protein-retaining receptor 2 (212 aa).

The Lumenal segment spans residues 1 to 4 (MNVF). A helical transmembrane segment spans residues 5–24 (RLSGDLSHLAAIIILLLKIW). Residues 25 to 32 (KSRSCAGI) are Cytoplasmic-facing. A helical membrane pass occupies residues 33–52 (SGKSQLLFALVFTTRYLDLL). The interval 47–48 (RY) is interaction with the K-D-E-L motif on target proteins. The Lumenal portion of the chain corresponds to 53-58 (TSFISL). Residues 59-79 (YNTSMKVIYIGCAYATVYLIY) form a helical membrane-spanning segment. At 80–92 (MKFKATYDGNHDT) the chain is on the cytoplasmic side. A helical membrane pass occupies residues 93 to 110 (FRVEFLVVPVGGLSVLVN). At 111 to 116 (HDFSPL) the chain is on the lumenal side. A helical membrane pass occupies residues 117 to 135 (EILWTFSIYLESVAILPQL). Topologically, residues 136–149 (FMISKTGEAETITT) are cytoplasmic. A helical membrane pass occupies residues 150–168 (HYLFFLGLYRALYLFNWIW). An interaction with the K-D-E-L motif on target proteins region spans residues 159–169 (RALYLFNWIWR). Topologically, residues 169 to 178 (RYSFEGFFDL) are lumenal. The helical transmembrane segment at 179 to 199 (IAIVAGVVQTILYCDFFYLYV) threads the bilayer. The Cytoplasmic segment spans residues 200–212 (TKVLKGKKLSLPA). The interval 204–207 (KGKK) is important for recycling of cargo proteins with the sequence motif K-D-E-L from the Golgi to the endoplasmic reticulum.

The protein belongs to the ERD2 family.

The protein localises to the endoplasmic reticulum membrane. The protein resides in the golgi apparatus membrane. It is found in the cytoplasmic vesicle. Its subcellular location is the COPI-coated vesicle membrane. Functionally, receptor for the C-terminal sequence motif K-D-E-L that is present on endoplasmic reticulum resident proteins and that mediates their recycling from the Golgi back to the endoplasmic reticulum. Binding is pH dependent, and is optimal at pH 5-5.4. This chain is ER lumen protein-retaining receptor 2 (kdelr2), found in Xenopus tropicalis (Western clawed frog).